Consider the following 114-residue polypeptide: Fluoride-specific ion channel FluC 1 (114 aa).

The next 3 membrane-spanning stretches (helical) occupy residues Val28–His48, Ile56–Val76, and Ile91–Leu111. Residues Gly66 and Thr69 each coordinate Na(+).

This sequence belongs to the fluoride channel Fluc/FEX (TC 1.A.43) family.

The protein localises to the cell membrane. It carries out the reaction fluoride(in) = fluoride(out). Its activity is regulated as follows. Na(+) is not transported, but it plays an essential structural role and its presence is essential for fluoride channel function. Functionally, fluoride-specific ion channel. Important for reducing fluoride concentration in the cell, thus reducing its toxicity. The protein is Fluoride-specific ion channel FluC 1 of Ligilactobacillus salivarius (strain UCC118) (Lactobacillus salivarius).